Reading from the N-terminus, the 99-residue chain is MVNVPKTKRAFCKGCKKHMMMKVTQYKTGKASLYAQGKRRYDRKQSGYGGQTKPVFHKKAKTTKKIVLRMQCQECKQTCMKGLKRCKHFEIGGDKKKGN.

Belongs to the eukaryotic ribosomal protein eL42 family.

The polypeptide is Large ribosomal subunit protein eL42 (RPL44) (Chlamydomonas reinhardtii (Chlamydomonas smithii)).